We begin with the raw amino-acid sequence, 127 residues long: F420-non-reducing hydrogenase subunit G (127 aa).

The protein belongs to the [NiFe]/[NiFeSe] hydrogenase small subunit family. The F420-non-reducing hydrogenase is composed of three subunits; MvhA, MvhD and MvhG. It forms a complex with the heterodisulfide reductase (hdr).

Part of a complex that provides reducing equivalents for heterodisulfide reductase. This chain is F420-non-reducing hydrogenase subunit G (mvhG), found in Methanothermus fervidus.